The following is a 245-amino-acid chain: 6-carboxyhexanoate--CoA ligase (245 aa).

Belongs to the BioW family. As to quaternary structure, homodimer. It depends on Mg(2+) as a cofactor.

It carries out the reaction heptanedioate + ATP + CoA = 6-carboxyhexanoyl-CoA + AMP + diphosphate. Its pathway is metabolic intermediate metabolism; pimeloyl-CoA biosynthesis; pimeloyl-CoA from pimelate: step 1/1. In terms of biological role, catalyzes the transformation of pimelate into pimeloyl-CoA with concomitant hydrolysis of ATP to AMP. The chain is 6-carboxyhexanoate--CoA ligase from Sulfurihydrogenibium sp. (strain YO3AOP1).